The primary structure comprises 409 residues: Formyl-CoA:oxalate CoA-transferase (409 aa).

CoA contacts are provided by residues 17–18 (QS), 71–74 (LNTK), 95–97 (NFG), R103, and 135–138 (KAYE). D167 serves as the catalytic Nucleophile. Positions 221–245 (LAEYPNDDFGDEVPRSGNASGGGQP) are disordered. 242-244 (GGQ) lines the substrate pocket.

It belongs to the CoA-transferase III family. Frc subfamily. As to quaternary structure, homodimer.

It carries out the reaction formyl-CoA + oxalate = oxalyl-CoA + formate. It participates in metabolic intermediate degradation; oxalate degradation; CO(2) and formate from oxalate: step 1/2. Involved in the catabolism of oxalate and in the adapatation to low pH via the induction of the oxalate-dependent acid tolerance response (ATR). Catalyzes the transfer of the CoA moiety from formyl-CoA to oxalate. The sequence is that of Formyl-CoA:oxalate CoA-transferase from Streptomyces avermitilis (strain ATCC 31267 / DSM 46492 / JCM 5070 / NBRC 14893 / NCIMB 12804 / NRRL 8165 / MA-4680).